An 814-amino-acid chain; its full sequence is Microbial collagenase (814 aa).

An N-terminal signal peptide occupies residues 1-21 (MELKILSVAIATTLTSTGVFA). The propeptide occupies 22–75 (LSEPVSQVTEQHAHSAHTHGVEFNRVEYQPTATLPIQPSKATRVQSLESLDESS). Zn(2+) is bound at residue His-477. Glu-478 is a catalytic residue. His-481 contributes to the Zn(2+) binding site. In terms of domain architecture, PKD spans 609-697 (APNAVITANS…VVISALGGND (89 aa)).

It belongs to the peptidase M9A family. Zn(2+) is required as a cofactor. Post-translationally, proteolytic cleavage might yield three different active forms.

The protein resides in the secreted. It catalyses the reaction Digestion of native collagen in the triple helical region at Xaa-|-Gly bonds. With synthetic peptides, a preference is shown for Gly at P3 and P1', Pro and Ala at P2 and P2', and hydroxyproline, Ala or Arg at P3'.. The sequence is that of Microbial collagenase from Vibrio alginolyticus.